Consider the following 235-residue polypeptide: Octanoyltransferase (235 aa).

Positions 52 to 229 (KNRQASMIFC…SICSALEYIN (178 aa)) constitute a BPL/LPL catalytic domain. Substrate-binding positions include 89 to 96 (RGGKITWH), 159 to 161 (AIG), and 172 to 174 (GFA). The active-site Acyl-thioester intermediate is Cys190.

This sequence belongs to the LipB family.

Its subcellular location is the cytoplasm. The catalysed reaction is octanoyl-[ACP] + L-lysyl-[protein] = N(6)-octanoyl-L-lysyl-[protein] + holo-[ACP] + H(+). The protein operates within protein modification; protein lipoylation via endogenous pathway; protein N(6)-(lipoyl)lysine from octanoyl-[acyl-carrier-protein]: step 1/2. Its function is as follows. Catalyzes the transfer of endogenously produced octanoic acid from octanoyl-acyl-carrier-protein onto the lipoyl domains of lipoate-dependent enzymes. Lipoyl-ACP can also act as a substrate although octanoyl-ACP is likely to be the physiological substrate. The chain is Octanoyltransferase from Tropheryma whipplei (strain Twist) (Whipple's bacillus).